A 492-amino-acid polypeptide reads, in one-letter code: MTLWINGDWVTGQGALRVKRNPVSGEVLWQGNDADAAQVGQACRAARAAFPRWARLSFGDRQVRVECFAGLLESNKAELTAIIARETGKPRWESATEVTAMINKIAISIKAYHVRTGEQRSEMPDGAASLRHRPHGVLAVFGPYNFPGHLPNGHIVPALLAGNTIIFKPSELTPWSGEAVMRLWQQAGLPPGVLNLVQGGRETGQALSALEDLDGLLFTGSANTGYQLHRQLSGQPEKILALEMGGNNPLIIDEVADIDAAVHLTIQSAFVTAGQRCTCARRLFLKSGTQGDAFLARLVAVSQRLTPGTWDDEPQPFIGGLISEQAAQQVVTAWQELEAMGGRTLLAPRLLQAGTSLLTPGIIEMTGVTGVPDEEVFGPLLRVWRYDNFDEAIRMANNTRFGLSCGLVSPEREKFDQLLLEARAGIVNWNKPLTGAASTAPFGGIGASGNHRPSAWYAADYCAWPMASLESDSLTLPATLNPGLDFSDEVVR.

220-225 serves as a coordination point for NAD(+); that stretch reads GSANTG. Residues E243 and C277 contribute to the active site.

It belongs to the aldehyde dehydrogenase family. AstD subfamily.

The catalysed reaction is N-succinyl-L-glutamate 5-semialdehyde + NAD(+) + H2O = N-succinyl-L-glutamate + NADH + 2 H(+). Its pathway is amino-acid degradation; L-arginine degradation via AST pathway; L-glutamate and succinate from L-arginine: step 4/5. In terms of biological role, catalyzes the NAD-dependent reduction of succinylglutamate semialdehyde into succinylglutamate. The chain is N-succinylglutamate 5-semialdehyde dehydrogenase from Escherichia coli O127:H6 (strain E2348/69 / EPEC).